The sequence spans 210 residues: Na(+)-translocating NADH-quinone reductase subunit D (210 aa).

5 consecutive transmembrane segments (helical) span residues 42–62, 72–92, 103–123, 131–151, and 178–198; these read FVMT…ISLI, IIAQ…VLKA, VFVG…AYAM, FLDG…VATV, and NGLL…IWGV.

Belongs to the NqrDE/RnfAE family. As to quaternary structure, composed of six subunits; NqrA, NqrB, NqrC, NqrD, NqrE and NqrF.

It localises to the cell inner membrane. It catalyses the reaction a ubiquinone + n Na(+)(in) + NADH + H(+) = a ubiquinol + n Na(+)(out) + NAD(+). Functionally, NQR complex catalyzes the reduction of ubiquinone-1 to ubiquinol by two successive reactions, coupled with the transport of Na(+) ions from the cytoplasm to the periplasm. NqrA to NqrE are probably involved in the second step, the conversion of ubisemiquinone to ubiquinol. This Aeromonas hydrophila subsp. hydrophila (strain ATCC 7966 / DSM 30187 / BCRC 13018 / CCUG 14551 / JCM 1027 / KCTC 2358 / NCIMB 9240 / NCTC 8049) protein is Na(+)-translocating NADH-quinone reductase subunit D.